An 88-amino-acid polypeptide reads, in one-letter code: Apolipoprotein C-I (88 aa).

The N-terminal stretch at 1–26 is a signal peptide; it reads MRLFLSLPVLVVVLAMVWEGPAPTQA.

This sequence belongs to the apolipoprotein C1 family.

It localises to the secreted. Inhibitor of lipoprotein binding to the low density lipoprotein (LDL) receptor, LDL receptor-related protein, and very low density lipoprotein (VLDL) receptor. Associates with high density lipoproteins (HDL) and the triacylglycerol-rich lipoproteins in the plasma and makes up about 10% of the protein of the VLDL and 2% of that of HDL. Appears to interfere directly with fatty acid uptake and is also the major plasma inhibitor of cholesteryl ester transfer protein (CETP). Binds free fatty acids and reduces their intracellular esterification. Modulates the interaction of APOE with beta-migrating VLDL and inhibits binding of beta-VLDL to the LDL receptor-related protein. This chain is Apolipoprotein C-I (APOC1), found in Neomonachus schauinslandi (Hawaiian monk seal).